Consider the following 129-residue polypeptide: Small ribosomal subunit protein uS11 (129 aa).

It belongs to the universal ribosomal protein uS11 family. As to quaternary structure, part of the 30S ribosomal subunit. Interacts with proteins S7 and S18. Binds to IF-3.

Located on the platform of the 30S subunit, it bridges several disparate RNA helices of the 16S rRNA. Forms part of the Shine-Dalgarno cleft in the 70S ribosome. This chain is Small ribosomal subunit protein uS11, found in Bartonella bacilliformis (strain ATCC 35685 / KC583 / Herrer 020/F12,63).